The chain runs to 46 residues: Defensin-1 (46 aa).

4 cysteine pairs are disulfide-bonded: Cys3-Cys46, Cys14-Cys35, Cys20-Cys40, and Cys24-Cys42.

This sequence belongs to the DEFL family. Epidermis and vascular bundles of pods, stems, roots, leaves and wet or dry seeds.

Its function is as follows. Possesses antifungal activity sensitive to inorganic cations. The sequence is that of Defensin-1 from Pisum sativum (Garden pea).